Consider the following 301-residue polypeptide: ATP synthase subunit gamma, mitochondrial (301 aa).

It belongs to the ATPase gamma chain family. F-type ATPases have 2 components, CF(1) - the catalytic core - and CF(0) - the membrane proton channel. CF(1) has five subunits: alpha(3), beta(3), gamma(1), delta(1), epsilon(1). CF(0) has three main subunits: a, b and c.

It localises to the mitochondrion. Its subcellular location is the mitochondrion inner membrane. Mitochondrial membrane ATP synthase (F(1)F(0) ATP synthase or Complex V) produces ATP from ADP in the presence of a proton gradient across the membrane which is generated by electron transport complexes of the respiratory chain. F-type ATPases consist of two structural domains, F(1) - containing the extramembraneous catalytic core, and F(0) - containing the membrane proton channel, linked together by a central stalk and a peripheral stalk. During catalysis, ATP synthesis in the catalytic domain of F(1) is coupled via a rotary mechanism of the central stalk subunits to proton translocation. Part of the complex F(1) domain and the central stalk which is part of the complex rotary element. The gamma subunit protrudes into the catalytic domain formed of alpha(3)beta(3). Rotation of the central stalk against the surrounding alpha(3)beta(3) subunits leads to hydrolysis of ATP in three separate catalytic sites on the beta subunits. The sequence is that of ATP synthase subunit gamma, mitochondrial (atp3) from Schizosaccharomyces pombe (strain 972 / ATCC 24843) (Fission yeast).